We begin with the raw amino-acid sequence, 708 residues long: MAERESGLSGGAASPPAASPFLGLHIASPPNFRLTHDISLEEFEDEDLSEITDECGISLQCKDTLSLRPPRAGLLSAGSSGSAGSRLQAEMLQMDLIDAASDTPGAEDDEEDDDELAAQRPGVGPSKAESGQEPASRSQGQGQGPGTGSGDTYRPKRPTTLNLFPQVPRSQDTLNNNSLGKKHSWQDRVSRSSSPLKTGEQTPPHEHICLSDELPPQGSPVPTQDRGTSTDSPCRRTAATQMAPPSGPPATAPGGRGHSHRDRIHYQADVRLEATEEIYLTPVQRPPDPAEPTSTFLPPTESRMSVSSDPDPAAYSVTAGRPHPSISEEDEGFDCLSSPEQAEPPGGGWRGSLGEPPPPPRASLSSDTSALSYDSVKYTLVVDEHAQLELVSLRPCFGDYSDESDSATVYDNCASASSPYESAIGEEYEEAPQPRPPTCLSEDSTPDEPDVHFSKKFLNVFMSGRSRSSSAESFGLFSCVINGEEHEQTHRAIFRFVPRHEDELELEVDDPLLVELQAEDYWYEAYNMRTGARGVFPAYYAIEVTKEPEHMAALAKNSDWIDQFRVKFLGSVQVPYHKGNDVLCAAMQKIATTRRLTVHFNPPSSCVLEISVRGVKIGVKADEAQEAKGNKCSHFFQLKNISFCGYHPKNNKYFGFITKHPADHRFACHVFVSEDSTKALAESVGRAFQQFYKQFVEYTCPTEDIYLE.

Positions 1–26 (MAERESGLSGGAASPPAASPFLGLHI) are disordered. Over residues 11–24 (GAASPPAASPFLGL) the composition is skewed to low complexity. Phosphoserine occurs at positions 14, 28, and 39. A disordered region spans residues 69–368 (PPRAGLLSAG…PPRASLSSDT (300 aa)). Low complexity predominate over residues 71-87 (RAGLLSAGSSGSAGSRL). Position 103 is a phosphothreonine; by MAPK8, MAPK9 and MAPK10 (Thr103). Residues 105 to 116 (GAEDDEEDDDEL) are compositionally biased toward acidic residues. The tract at residues 126-282 (SKAESGQEPA…EATEEIYLTP (157 aa)) is JNK-binding domain (JBD). Ser149 carries the phosphoserine modification. The interval 154 to 173 (RPKRPTTLNLFPQVPRSQDT) is minimal inhibitory domain (MID). A compositionally biased stretch (polar residues) spans 159 to 179 (TTLNLFPQVPRSQDTLNNNSL). Phosphoserine occurs at positions 178, 184, 190, 192, and 193. A compositionally biased stretch (polar residues) spans 191–201 (RSSSPLKTGEQ). Position 202 is a phosphothreonine; by MAPK8, MAPK9 and MAPK10 (Thr202). Ser211 bears the Phosphoserine mark. Residues 220–232 (PVPTQDRGTSTDS) are compositionally biased toward polar residues. Residues 264–274 (IHYQADVRLEA) are compositionally biased toward basic and acidic residues. The interval 280 to 468 (LTPVQRPPDP…NVFMSGRSRS (189 aa)) is interaction with MAP3K7. The segment covering 292 to 308 (PTSTFLPPTESRMSVSS) has biased composition (polar residues). Phosphoserine is present on residues Ser308, Ser325, Ser327, Ser337, Ser352, Ser363, Ser366, Ser404, and Ser406. 2 consecutive short sequence motifs (D-box) follow at residues 350-357 (RGSLGEPP) and 361-369 (RASLSSDTS). The residue at position 408 (Thr408) is a Phosphothreonine. Positions 426 to 448 (EEYEEAPQPRPPTCLSEDSTPDE) are disordered. Phosphoserine occurs at positions 441 and 444. Phosphothreonine is present on Thr445. 4 positions are modified to phosphoserine: Ser466, Ser468, Ser469, and Ser470. The interaction with VRK2 stretch occupies residues 468–657 (SSSAESFGLF…PKNNKYFGFI (190 aa)). Positions 485–546 (EHEQTHRAIF…PAYYAIEVTK (62 aa)) constitute an SH3 domain. Positions 558–697 (SDWIDQFRVK…FQQFYKQFVE (140 aa)) constitute a PID domain.

It belongs to the JIP scaffold family. Forms homo- or heterooligomeric complexes. Binds specific components of the JNK signaling pathway namely MAPK8/JNK1, MAPK9/JNK2, MAPK10/JNK3, MAP2K7/MKK7, MAP3K11/MLK3 and DLK1. Also binds the proline-rich domain-containing splice variant of apolipoprotein E receptor 2 (ApoER2). Interacts, via the PID domain, with ARHGEF28. Binds the cytoplasmic tails of LRP1 and LRP2 (Megalin). Binds the TPR motif-containing C-terminal of kinesin light chain, KLC1. Pre-assembled MAPK8IP1 scaffolding complexes are then transported as a cargo of kinesin, to the required subcellular location. Interacts with the cytoplasmic domain of APP. Interacts with DCLK2, VRK2 and MAP3K7/TAK1. Found in a complex with SH3RF1, RAC1, MAP3K11/MLK3, MAP2K7/MKK7 and MAPK8/JNK1. Found in a complex with SH3RF1, RAC2, MAP3K7/TAK1, MAP2K7/MKK7, MAPK8/JNK1 and MAPK9/JNK2. Interacts with SH3RF2. Phosphorylated by MAPK8, MAPK9 and MAPK10. Phosphorylation on Thr-103 is also necessary for the dissociation and activation of MAP3K12. Phosphorylated by VRK2. Hyperphosphorylated during mitosis following activation of stress-activated and MAP kinases. In terms of processing, ubiquitinated. Two preliminary events are required to prime for ubiquitination; phosphorylation and an increased in intracellular calcium concentration. Then, the calcium influx initiates ubiquitination and degradation by the ubiquitin-proteasome pathway. As to expression, highly expressed in brain and pancreatic beta-cells. Weaker expression found in kidney.

It is found in the cytoplasm. The protein localises to the perinuclear region. It localises to the nucleus. Its subcellular location is the endoplasmic reticulum membrane. The protein resides in the mitochondrion membrane. The JNK-interacting protein (JIP) group of scaffold proteins selectively mediates JNK signaling by aggregating specific components of the MAPK cascade to form a functional JNK signaling module. Required for JNK activation in response to excitotoxic stress. Cytoplasmic MAPK8IP1 causes inhibition of JNK-regulated activity by retaining JNK in the cytoplasm and thus inhibiting the JNK phosphorylation of c-Jun. May also participate in ApoER2-specific reelin signaling. Directly, or indirectly, regulates GLUT2 gene expression and beta-cell function. Appears to have a role in cell signaling in mature and developing nerve terminals. May function as a regulator of vesicle transport, through interactions with the JNK-signaling components and motor proteins. Functions as an anti-apoptotic protein and whose level seems to influence the beta-cell death or survival response. Acts as a scaffold protein that coordinates with SH3RF1 in organizing different components of the JNK pathway, including RAC1 or RAC2, MAP3K11/MLK3 or MAP3K7/TAK1, MAP2K7/MKK7, MAPK8/JNK1 and/or MAPK9/JNK2 into a functional multiprotein complex to ensure the effective activation of the JNK signaling pathway. Regulates the activation of MAPK8/JNK1 and differentiation of CD8(+) T-cells. In Rattus norvegicus (Rat), this protein is C-Jun-amino-terminal kinase-interacting protein 1 (Mapk8ip1).